We begin with the raw amino-acid sequence, 180 residues long: ATP synthase subunit delta (180 aa).

The protein belongs to the ATPase delta chain family. As to quaternary structure, F-type ATPases have 2 components, F(1) - the catalytic core - and F(0) - the membrane proton channel. F(1) has five subunits: alpha(3), beta(3), gamma(1), delta(1), epsilon(1). CF(0) has four main subunits: a(1), b(1), b'(1) and c(10-14). The alpha and beta chains form an alternating ring which encloses part of the gamma chain. F(1) is attached to F(0) by a central stalk formed by the gamma and epsilon chains, while a peripheral stalk is formed by the delta, b and b' chains.

The protein resides in the cellular thylakoid membrane. Its function is as follows. F(1)F(0) ATP synthase produces ATP from ADP in the presence of a proton or sodium gradient. F-type ATPases consist of two structural domains, F(1) containing the extramembraneous catalytic core and F(0) containing the membrane proton channel, linked together by a central stalk and a peripheral stalk. During catalysis, ATP synthesis in the catalytic domain of F(1) is coupled via a rotary mechanism of the central stalk subunits to proton translocation. In terms of biological role, this protein is part of the stalk that links CF(0) to CF(1). It either transmits conformational changes from CF(0) to CF(1) or is implicated in proton conduction. This Prochlorococcus marinus (strain MIT 9301) protein is ATP synthase subunit delta.